A 316-amino-acid chain; its full sequence is Cuticle collagen 13 (316 aa).

The first 36 residues, 1-36 (MSEDLKQIAQETESLRKVAFFGIAVSTIATLTAIIA), serve as a signal peptide directing secretion. 2 stretches are compositionally biased toward low complexity: residues 127-157 (SGAAGPAGSPGQDGAPGNDGAPGAPGNPGQD) and 183-204 (APGQKGPSGAPGAPGQSGGAAL). The tract at residues 127-316 (SGAAGPAGSP…CPPPRTAPGY (190 aa)) is disordered. 5 triple-helical region regions span residues 128–157 (GAAGPAGSPGQDGAPGNDGAPGAPGNPGQD), 176–202 (GPPGPSGAPGQKGPSGAPGAPGQSGGA), 206–235 (GPPGPAGPPGPAGQPGSNGNAGAPGAPGQV), 240–266 (GTPGPAGPPGSPGPAGAPGQPGQAGSS), and 269–304 (GGPGPQGDAGAPGAPGAPGQAGAPGQDGESGSEGAC). Residues 205–217 (PGPPGPAGPPGPA) are compositionally biased toward pro residues. The segment covering 219–234 (QPGSNGNAGAPGAPGQ) has biased composition (low complexity). Residues 241 to 251 (TPGPAGPPGSP) are compositionally biased toward pro residues. Composition is skewed to low complexity over residues 256–266 (APGQPGQAGSS) and 276–295 (DAGAPGAPGAPGQAGAPGQD). Residues 307 to 316 (CPPPRTAPGY) are compositionally biased toward pro residues.

This sequence belongs to the cuticular collagen family. Collagen polypeptide chains are complexed within the cuticle by disulfide bonds and other types of covalent cross-links.

Its function is as follows. Nematode cuticles are composed largely of collagen-like proteins. The cuticle functions both as an exoskeleton and as a barrier to protect the worm from its environment. This Caenorhabditis elegans protein is Cuticle collagen 13 (col-13).